Here is a 3122-residue protein sequence, read N- to C-terminus: MNKNRYRVVFNRARGALMVVQENGRASHGSGSRDARAGVVPAWLSLSPFALRHVALAVLVAAGVVPIWVNAQVVAGGAHAPSVIQTQNGLQQVNINRPGASGVSMNTYNQFDVPKPGIILNNSPINVQTQLGGIIGGNPNFQAGDAARLIVNQVNSNNPSFIRGKVEIGGAAAQLVIANQAGLVVDGGGFLNTSRATLTTGNPNFGPDGSLTGFNVNQGLISVVGAGLDTANVDQVDLLARAVQINAKAYAKTLNVVAGSNQVDYNTLNATPIAANGPAPTIAIDVSQLGGMYANRVFLVSSENGVGVANAGDIAAQAGDLTLQANGRLVLSGHTNAAGNMSLSASGGIQNSGVTYGKQSVTITTGADLTNSGALTAQQNLTANVGSLNSTGTLGAGINVDSTVGTSGDLNVTSSGQLTATGTNSAAGNATFTGSGVNLSNSATAANGNLALTATAGDVNLAGSTVSAKGAVNAQASGTVVNDRGNLSSGAGMTLGGGSLSNQGGRANSQGPLSVQMAGTVSNQNGMLSSQSTADVRGSAIQNNAGLIQSAGKQTIAGASIDNSAGRLISLNADGLSVTATGALTNAAGANVSGDPGGVIGGKGDVTVQGNTVTNSGSMSADATLHVIGQSVDNGNGALHAGQTTTVDAGNHLSNAGGRVEGQSAVLNGATLDNSQGTVNAATVSLNGTTLLNHGGTVTQTGTGPMTVAITDTLDNSNNGLIQTRSTDLSLTSTTLINDNGGTITHVGPGTLTVGNGSGTVSNKAGAIASNGRTVLQGKTIDNSAGSASGQTGLSVNAADSITNLGGKLTSNANVDVTAGGALVNDGGELGSKTAATTIHSASLSNLNGKIVSPTLTATVAGLLDNSQNGDFEANQLALTAANLKNQGGHISQWQSGPTTLAVSGTLDNSNGGVIQTNSTDLTLAPAVLDNSKGTITHGGTGTLTLTPGNGAGALQNTGGTIGTNGQAIVKAGSLDNGSGVIAAKLGLSATIAGAMNNTQGLMRSNAALSIISNGALSNHQGHIEAGTPGDTSTLSIQAASIDNTDGAVHDFGTGKMTVQGGSQIVNSHAGGVDGMGQMTGQGDVTIGAASISNTQGGQLMGANLLIQGATLDNSGGQVGNVANATGDVNVAMSGAVTNTNGSITSTRDLSVAASTLLGGGAYSAARDAAINLQGDFTTTPQTQFNIGRDLTFTLPGTFANSANLQSVHNLTVNAGNIVNTGAMTAGSLLSTHSGDLTNYGAMVGGSVAIQASGTVSNLGPVALIGASDTSGLLEIVAHDIENRDDTTLGDSMPTTTIFGLGKVALAGGKDANGNYTNAALINNSSAAIQSGASMELHADKVTNTRRVMQTSGNTSQVDPALLQQLGISMSGCAAYYIAACSGQDVHWINLFHDPNYPDYDPAPIIAALKLQPGGVFTVPPNGGQWNSGYQYTTYEGKATANTVTKLSPGAQIASGGDLDASTVKTFQNYWSSVTAAGNIKQPASLDMDGWGATGQQAPGVTVVYSGYYHYNNYDNSEHNWTLPFGDKPFVGGPGGYTQAAPADVRQYSLPDYRSTWGANGTISGNGVSVNNTAANATIPSLGLLPGQAVPGLTIGTVSGNASGTQSGAAAIKGGTPTWVDPVIASATAVNVLSNLTIPQGGLYRPNSAPNPTYLIETNPAFTRMNNFLSSDYYLNQIGVNPLTTEKRLGDGFYEQQLVRNQVTQLTGKAVLGPYTDLQGMYQSLMLAGAEWSKSLNLPLGMSLSAQQVAALTTNVIIMQTETVGGQQVLVPVVYLAKADQQNANGPLITAGNIDLKNTQVFTNSGTVKADTTLALQGKQIDNAFGALQSGGLTSLDTTGNVDLTSANVKAGSLDLNAGNKLILDTATQTTHQVSRDGATSDKTTLGPAANLNVAGDASIKTGGDFQQNAGNLNVGGNLNANIGGNWNLGVQQTGEHKVVQRANGVSDTDLNSATGSTVNVGGKSAIGVGGDLTAQGARLDFGQGGTVAAKGNVTFGAASTTSTINANSSGDQGNRSYAETRHGSDQALTGTTVKGGDTLNVVSGKDINVIGSTIDLKKGDANLLAAGDVNVGAVTERHVYNSRETHSRSGVVSGTKIASSQDATSTVANGSLISADGVSIGSGKDINVQGSTVVGTHDVALNAAHDVNITTSQDTSQSSTTYQEQHSGLMSGGGLSFSVGNSKLAQQNQSSSVTNNASTVGSVDGNLTVNAGNTLHVKGSDLVAGKDVTGTAANIVVDSATDTTRQAQQQQTSKSGLTVGLSGSVGDAINNAISETQAARESAKDSNGRASALHSIAAAGDVAFGGLGAKALLDGAKGPQAPSIGVQVSVGSSHSSMQSSEDQTIQRGSSINAGGNAKLIATGNGTPKDGNITIAGSNVNAANVALIANNQVNLVNTTDTDKTQSSNSSSGSSVGVSIGTNGIGVSASMQRAHGDGNSDAAIQNNTHINASQTATIVSGGDTNVIGANVNANKVVADVGGNLNVASVQDTTVSAAHQSSAGGGFTISQTGGGASFSAQNGHADGNYAGVNEQAGIQAGSGGFDVTVKGNTDLKGAYIASTADASKNSLTTGTLTTSDIENHSHYSANSAGFSAGASVGVSTKAVGPSSVSGSGGVTPMVFQNDSGDQSATTKSAVSAGAINITKPGEQTQDVANLNRDATNLNGTVSKTPDVQKMLSQQADTMNAAQAAGQTVSQGIGLYADGKRKDAIDAAKAAYERGDLVAMQSYIDQAKSWDEGGASRAGLQATGGALIGGLGGGSVLTAIGGAAGAGTSSLLAGQAEKISKSVGDMTGSSLVGNIAANVAATVGGALVGGSAGAAMASNVELYNAGNDPQKTDDRATIAGLQGLLNQAVAAGAKGLSTIANARNAIGNAISGALDSAADQFGTLMKRDAEGKMSQSPAELVSQGVANGINTVLGSKGGEPPLAGPSAVAVDSLTGQAANAALGATDRTPPSNAILSNSNSDNNSTQGSQSGTVTKTPNPEATGSLSGKPTQIPPLSDEVTTRSLIRENQSAVTLANKGYDVVQNPEVLGPKNPDYTINGQVFDNYAPATGNVRNIATTISNKVSSGQASNIVVNLADSSASPAAIEAQINSYPIPGLGKVIVIDKLGNITIIKPKGN.

The interval 36–205 (RAGVVPAWLS…ATLTTGNPNF (170 aa)) is two-partner system transport domain (TPS). The chain crosses the membrane as a helical span at residues 54–74 (VALAVLVAAGVVPIWVNAQVV). The FHA-1 stretch occupies residues 256 to 1254 (VVAGSNQVDY…GGSVAIQASG (999 aa)). The interval 492 to 512 (GMTLGGGSLSNQGGRANSQGP) is disordered. Polar residues predominate over residues 500–512 (LSNQGGRANSQGP). The segment at 1345–1635 (TRRVMQTSGN…SATAVNVLSN (291 aa)) is receptor binding domain (RBD). A periplasmic FHA-1 repeat (pFR) region spans residues 1790 to 1845 (TAGNIDLKNTQVFTNSGTVKADTTLALQGKQIDNAFGALQSGGLTSLDTTGNVDLT). Residues 1947–2085 (SDTDLNSATG…TERHVYNSRE (139 aa)) are FHA-2. 3 disordered regions span residues 2002-2031 (TSTINANSSGDQGNRSYAETRHGSDQALTG), 2151-2174 (TTSQDTSQSSTTYQEQHSGLMSGG), and 2325-2352 (IGVQVSVGSSHSSMQSSEDQTIQRGSSI). Residues 2086–2825 (THSRSGVVSG…SAGAAMASNV (740 aa)) form a pretoxin (PT) domain region. Low complexity-rich tracts occupy residues 2151–2170 (TTSQDTSQSSTTYQEQHSGL) and 2325–2341 (IGVQVSVGSSHSSMQSS). Over residues 2342–2352 (EDQTIQRGSSI) the composition is skewed to polar residues. The C-terminal effector domain (CT), has tRNA nuclease activity stretch occupies residues 2821–3122 (MASNVELYNA…NITIIKPKGN (302 aa)). The ELYN C-terminal motif motif lies at 2826–2829 (ELYN). Residues 2948–3000 (GATDRTPPSNAILSNSNSDNNSTQGSQSGTVTKTPNPEATGSLSGKPTQIPPL) are disordered. Positions 2948–3122 (GATDRTPPSN…NITIIKPKGN (175 aa)) are truncated CT domain, has tRNA nuclease activity, sufficient for interaction with CdiI-2. A compositionally biased stretch (polar residues) spans 2953–2994 (TPPSNAILSNSNSDNNSTQGSQSGTVTKTPNPEATGSLSGKP). The tract at residues 2987–3122 (TGSLSGKPTQ…NITIIKPKGN (136 aa)) is has tRNase activity. Residues glutamate 3012, aspartate 3039, aspartate 3048, and lysine 3067 contribute to the active site.

It in the N-terminal section; belongs to the CdiA toxin family. As to quaternary structure, interacts with cognate immunity protein CdiI, which blocks its tRNA nuclease activity. The truncated CT fragment (residues 2948-3122) specifically interacts with cognate CdiI which inhibits the tRNA nuclease activity. The truncated CT is more stable in vitro than the original CT fragment characterized in E.coli.

The protein resides in the membrane. It localises to the secreted. Its subcellular location is the target cell. The protein localises to the target cell cytoplasm. Toxic component of a toxin-immunity protein module, which functions as a cellular contact-dependent growth inhibition (CDI) system. CDI modules allow bacteria to communicate with and inhibit the growth of closely related neighboring bacteria in a contact-dependent fashion. The C-terminal 301 residues (the CT fragment) cleaves near the C-terminus of E.coli tRNA1B(Ala), probably preventing tRNA charging, and inhibits growth in E.coli. A truncated CT fragment (residues 2948-3122) has tRNA endonuclease activity on several B.thailandensis tRNAs as well as tRNA2(Arg) where it cleaves after A-70 and U-71. Inactive CT domain binds tRNA, probably in a 1:1 complex. Toxic activity is neutralized by coexpression of the cognate immunity protein CdiI in E.coli, but not by non-cognate immunity proteins from other strains of B.pseudomallei. May use lipopolysaccharide as its target cell receptor. Probably gains access to the cytoplasm of target cells (B.thailandensis strain E264) by using integral inner membrane protein BTH_II0599. Protein BTH_I0359 is also implicated in an unknown fashion in CDI in B.thailandensis strain E264. Its function is as follows. Expression of this cdiAIB locus in B.thailandensis confers protection against other bacteria carrying the locus; growth inhibition requires cellular contact. Functionally, the CdiA protein is thought to be exported from the cell through the central lumen of CdiB, the other half of its two-partner system (TPS). The TPS domain probably remains associated with CdiB while the FHA-1 domain forms an extended filament with the receptor-binding domain (RBD) at its extremity; in the secretion arrested state the C-terminus of the RBD domain form a hairpin-like structure as the FHA-2, PT and CT domains are periplasmic. Upon binding to a target cell outer membrane receptor (possibly a lipoprotein in this CDI) a signal is transmitted to activate secretion. The filament elongates slightly, the rest of CdiA is secreted and the FHA-2 domain becomes stably associated with the target cell's outer membrane where it facilitates entry of the toxic CT domain into the target cell periplasm. From there the toxic CT domain is cleaved and gains access to the target cell cytoplasm via an inner membrane protein (probably inner membrane protein BTH_II0599). This chain is tRNA nuclease CdiA-2 (cdiA2), found in Burkholderia pseudomallei (strain 1026b).